The sequence spans 249 residues: Chromosome segregation and cytokinesis defective protein 1 (249 aa).

Positions 12–48 (VVAMADTLETRVKDLLEEYKKKLREVALQTAKAESDR) form a coiled coil. Disordered stretches follow at residues 70-89 (PDDFYIESGEEEEEGEAAVA), 94-183 (LPSE…PEKP), and 208-249 (TTAT…GTSV). A compositionally biased stretch (acidic residues) spans 73–85 (FYIESGEEEEEGE). Over residues 109-126 (QKTSIPIGQNSGRNTVQV) the composition is skewed to polar residues. Residues 224 to 236 (SGAASKKAAAAAG) show a composition bias toward low complexity.

It belongs to the borealin family. Highly divergent. Component of the CPC complex which consists of icp-1; csc-1; bir-1 and air-2. Within the complex interacts with Aurora B/air-2, bir-1 and icp-1.

Its subcellular location is the nucleus. It is found in the chromosome. The protein resides in the centromere. It localises to the cytoplasm. The protein localises to the cytoskeleton. Its subcellular location is the spindle. Functionally, component of the chromosomal passenger complex (CPC), a complex that acts as a key regulator of chromosome segregation and cytokinesis during mitosis. The CPC complex has essential functions at the centromere in ensuring correct chromosome alignment and segregation. In the complex, it may be required to direct the Aurora B/air-2 to centromeric DNA. The polypeptide is Chromosome segregation and cytokinesis defective protein 1 (csc-1) (Caenorhabditis elegans).